Reading from the N-terminus, the 247-residue chain is DNA polymerase sliding clamp (247 aa).

It belongs to the PCNA family. Homotrimer. The subunits circularize to form a toroid; DNA passes through its center. Replication factor C (RFC) is required to load the toroid on the DNA.

Sliding clamp subunit that acts as a moving platform for DNA processing. Responsible for tethering the catalytic subunit of DNA polymerase and other proteins to DNA during high-speed replication. This Methanospirillum hungatei JF-1 (strain ATCC 27890 / DSM 864 / NBRC 100397 / JF-1) protein is DNA polymerase sliding clamp.